Reading from the N-terminus, the 635-residue chain is ATP-dependent zinc metalloprotease FtsH (635 aa).

The Cytoplasmic segment spans residues 1–6; that stretch reads MNNQGR. The chain crosses the membrane as a helical span at residues 7–27; sequence SILTWAALFVFVILLFNVFQS. Over 28 to 103 the chain is Periplasmic; the sequence is DGLLGGRNNI…VVPLETRMNT (76 aa). Residues 104 to 124 form a helical membrane-spanning segment; that stretch reads FLGFLISWFPMLLLIGVWVFF. Residues 125 to 635 lie on the Cytoplasmic side of the membrane; the sequence is MRQMHGGGKA…KKAKKESTNI (511 aa). 195–202 lines the ATP pocket; it reads GPPGTGKT. H417 is a binding site for Zn(2+). E418 is a catalytic residue. Zn(2+) contacts are provided by H421 and D495. Positions 600–635 are disordered; the sequence is SEEENKFPFNDSPTIKIDKEKSPEKAKKAKKESTNI. A compositionally biased stretch (basic and acidic residues) spans 615–635; that stretch reads KIDKEKSPEKAKKAKKESTNI.

The protein in the central section; belongs to the AAA ATPase family. This sequence in the C-terminal section; belongs to the peptidase M41 family. As to quaternary structure, homohexamer. Zn(2+) is required as a cofactor.

The protein localises to the cell inner membrane. In terms of biological role, acts as a processive, ATP-dependent zinc metallopeptidase for both cytoplasmic and membrane proteins. Plays a role in the quality control of integral membrane proteins. This Rickettsia felis (strain ATCC VR-1525 / URRWXCal2) (Rickettsia azadi) protein is ATP-dependent zinc metalloprotease FtsH.